The following is a 440-amino-acid chain: Amino acid transporter AVT6D (440 aa).

The next 11 helical transmembrane spans lie at 26-46, 47-67, 102-122, 149-169, 182-202, 219-239, 262-282, 309-329, 356-376, 377-397, and 410-430; these read FAGA…MAIP, AAFK…IAWL, AVTV…SIII, WNTR…PLVL, ISFL…IIAL, GGLS…AFTF, ISVI…YLLF, IVRL…NFSL, FPLL…WYFF, QFLG…AIVL, and IVAS…ISTN.

Belongs to the amino acid/polyamine transporter 2 family. Amino acid/auxin permease (AAAP) (TC 2.A.18.6) subfamily.

The protein localises to the membrane. In Arabidopsis thaliana (Mouse-ear cress), this protein is Amino acid transporter AVT6D.